The primary structure comprises 142 residues: Transcriptional regulator MraZ (142 aa).

SpoVT-AbrB domains follow at residues 5-47 (EYNH…PMEE) and 76-119 (ANEI…SREK).

This sequence belongs to the MraZ family. Forms oligomers.

Its subcellular location is the cytoplasm. It localises to the nucleoid. This chain is Transcriptional regulator MraZ, found in Clostridium tetani (strain Massachusetts / E88).